We begin with the raw amino-acid sequence, 276 residues long: MAEENQEETLELKPSRKPPHFVLIHGMSLGSWCWYKIKCLMEVSGFTVTCIDLKSSGIDSSSVDSLTTFDQYNQPLIDFLSSFPEQEQVILVGHSAGGLSLTSAIQRFPKKICLAVFIGASMLKNGLQTDEDMKDGVPDLSEHGDVYELGFGLGPENPPTSAIIKPEYRRKLLYHMSPQQECSLAALMMRPAPILALTTAKLEEEEKEKGQEEQVPRVYIKTLLDRVMKPEQQDAMIRRWPPSQVYELESDHSPFFSNPFVLFGLLIKAAVSVGSI.

In terms of domain architecture, AB hydrolase-1 spans 19–138 (PHFVLIHGMS…TDEDMKDGVP (120 aa)). Serine 95 (acyl-ester intermediate) is an active-site residue. Residues aspartate 225 and histidine 252 each act as charge relay system in the active site.

Belongs to the AB hydrolase superfamily. Methylesterase family. Expressed in several tissues of seedlings and adult plants, with a higher relative level of expression in the seedling shoot apex and the adult stem.

The enzyme catalyses methyl (indol-3-yl)acetate + H2O = (indol-3-yl)acetate + methanol + H(+). It participates in plant hormone biosynthesis. Functionally, methylesterase that efficiently and specifically hydrolyzes methyl indole-3-acetic acid (MeIAA) to IAA (auxin). MeIAA is believed to be an inactive form of auxin that needs to be demethylated to exert a biological effect. This chain is Methylesterase 17, found in Arabidopsis thaliana (Mouse-ear cress).